The primary structure comprises 775 residues: Thiamine repressible genes regulatory protein thi1 (775 aa).

The zn(2)-C6 fungal-type DNA-binding region spans 39–65 (CKHCRQKKIKCNGGQPCISCKTLNIEC). The residue at position 208 (Ser208) is a Phosphoserine. 2 disordered regions span residues 676–695 (LTGE…FQPF) and 754–775 (NVSE…EKNG).

It is found in the nucleus. Functionally, transcription factor that activates the nmt1 promoter. Regulation of thiamine repressible genes. Positively regulates conjugation during meiosis. This chain is Thiamine repressible genes regulatory protein thi1 (thi1), found in Schizosaccharomyces pombe (strain 972 / ATCC 24843) (Fission yeast).